The following is a 468-amino-acid chain: V-type proton ATPase subunit H (468 aa).

The protein belongs to the V-ATPase H subunit family. In terms of assembly, V-ATPase is a heteromultimeric enzyme made up of two complexes: the ATP-hydrolytic V1 complex and the proton translocation V0 complex. The V1 complex consists of three catalytic AB heterodimers that form a heterohexamer, three peripheral stalks each consisting of EG heterodimers, one central rotor including subunits D and F, and the regulatory subunits C and H. The proton translocation complex V0 consists of the proton transport subunit a, a ring of proteolipid subunits c9c'', rotary subunit d, subunits e and f, and the accessory subunits VhaAC45 and ATP6AP2.

In terms of biological role, subunit of the V1 complex of vacuolar(H+)-ATPase (V-ATPase), a multisubunit enzyme composed of a peripheral complex (V1) that hydrolyzes ATP and a membrane integral complex (V0) that translocates protons. V-ATPase is responsible for acidifying and maintaining the pH of intracellular compartments and in some cell types, is targeted to the plasma membrane, where it is responsible for acidifying the extracellular environment. Subunit H is essential for V-ATPase activity, but not for the assembly of the complex. The chain is V-type proton ATPase subunit H (VhaSFD) from Drosophila melanogaster (Fruit fly).